The chain runs to 143 residues: Peptide methionine sulfoxide reductase MsrB (143 aa).

The MsrB domain occupies 16 to 139; it reads DAELRRRLTP…NSAALNFESR (124 aa). Residues cysteine 55, cysteine 58, cysteine 104, and cysteine 107 each coordinate Zn(2+). Cysteine 128 acts as the Nucleophile in catalysis.

This sequence belongs to the MsrB Met sulfoxide reductase family. Requires Zn(2+) as cofactor.

It catalyses the reaction L-methionyl-[protein] + [thioredoxin]-disulfide + H2O = L-methionyl-(R)-S-oxide-[protein] + [thioredoxin]-dithiol. The polypeptide is Peptide methionine sulfoxide reductase MsrB (Burkholderia ambifaria (strain MC40-6)).